The sequence spans 114 residues: MICOS complex subunit MIC12 (114 aa).

Residues 4 to 26 form a helical membrane-spanning segment; sequence IAKLGSFTLVSGVVATSCYYYFI.

Belongs to the MICOS complex subunit Mic12 family. Component of the mitochondrial contact site and cristae organizing system (MICOS) complex.

Its subcellular location is the mitochondrion inner membrane. Component of the MICOS complex, a large protein complex of the mitochondrial inner membrane that plays crucial roles in the maintenance of crista junctions, inner membrane architecture, and formation of contact sites to the outer membrane. This chain is MICOS complex subunit MIC12 (AIM5), found in Candida glabrata (strain ATCC 2001 / BCRC 20586 / JCM 3761 / NBRC 0622 / NRRL Y-65 / CBS 138) (Yeast).